Reading from the N-terminus, the 134-residue chain is Large-conductance mechanosensitive channel (134 aa).

2 helical membrane passes run 16–36 and 81–101; these read VIDL…VTAL and GDFI…FIIV.

The protein belongs to the MscL family. In terms of assembly, homopentamer.

The protein resides in the cell inner membrane. Functionally, channel that opens in response to stretch forces in the membrane lipid bilayer. May participate in the regulation of osmotic pressure changes within the cell. The sequence is that of Large-conductance mechanosensitive channel from Xylella fastidiosa (strain Temecula1 / ATCC 700964).